Here is a 498-residue protein sequence, read N- to C-terminus: Ammonium transporter 3 member 1 (498 aa).

A run of 11 helical transmembrane segments spans residues 33 to 53 (ISAT…YGSI), 58 to 78 (WAVN…LCWV), 143 to 163 (MVYF…GSLL), 171 to 191 (WMLF…FSLW), 206 to 226 (GGYV…YWVG), 241 to 261 (VLLM…FNGG), 276 to 296 (NTNI…VIFF), 301 to 321 (VIGA…GAGL), 325 to 345 (WAAI…MMVV), 369 to 389 (GFLG…SLFL), and 412 to 432 (VAGA…VCLA). Positions 478–498 (DNNDTHHNNNKAAPSGVTQNV) are disordered. Residues 487-498 (NKAAPSGVTQNV) show a composition bias toward polar residues.

It belongs to the ammonia transporter channel (TC 1.A.11.2) family. Expressed in root.

The protein resides in the membrane. Functionally, involved in ammonium transport. The sequence is that of Ammonium transporter 3 member 1 (AMT3-1) from Oryza sativa subsp. japonica (Rice).